We begin with the raw amino-acid sequence, 295 residues long: Defective in cullin neddylation protein AAR3 (295 aa).

The DCUN1 domain maps to 1 to 180 (MDSSPVSARF…LIDDFVEHMY (180 aa)). A Nuclear localization signal motif is present at residues 214–221 (YRRPHTGL). Residues 214-251 (YRRPHTGLRNIPGLKRKTSKKNDEEEEDEDEEVLETQN) form a disordered region. A compositionally biased stretch (acidic residues) spans 237–247 (EEEEDEDEEVL).

The protein resides in the nucleus. Its function is as follows. May contribute to the neddylation of all cullins by transferring NEDD8 from N-terminally acetylated NEDD8-conjugating E2s enzyme to different cullin C-terminal domain-RBX complexes; neddylation of cullins play an essential role in the regulation of SCF-type complexes activity. Regulates responses to the synthetic auxin 2,4-dichlorophenoxyacetic acid (2,4-D) in roots, probably by modulating the SCF(TIR1) ubiquitin E3 ligase complex-mediated proteolysis. In Arabidopsis thaliana (Mouse-ear cress), this protein is Defective in cullin neddylation protein AAR3.